A 489-amino-acid polypeptide reads, in one-letter code: Rhamnulokinase (489 aa).

13-17 (ASSGR) provides a ligand contact to ATP. The cysteines at positions 68 and 222 are disulfide-linked. Substrate contacts are provided by residues Gly-83 and 236–238 (HDT). The active-site Proton acceptor is the Asp-237. Residue Thr-259 participates in ATP binding. Asn-296 contacts substrate. ATP is bound at residue Gln-304. Cys-353 and Cys-370 form a disulfide bridge. Gly-402 contacts ATP. Cys-413 and Cys-417 are oxidised to a cystine.

This sequence belongs to the rhamnulokinase family. As to quaternary structure, monomer. Mg(2+) is required as a cofactor.

The catalysed reaction is L-rhamnulose + ATP = L-rhamnulose 1-phosphate + ADP + H(+). Its pathway is carbohydrate degradation; L-rhamnose degradation; glycerone phosphate from L-rhamnose: step 2/3. Involved in the catabolism of L-rhamnose (6-deoxy-L-mannose). Catalyzes the transfer of the gamma-phosphate group from ATP to the 1-hydroxyl group of L-rhamnulose to yield L-rhamnulose 1-phosphate. The sequence is that of Rhamnulokinase from Escherichia coli (strain 55989 / EAEC).